An 842-amino-acid polypeptide reads, in one-letter code: Microcephalin (842 aa).

Residues 1–93 (MAAPILKDVV…AHIDESLFPA (93 aa)) enclose the BRCT 1 domain. 4 positions are modified to phosphoserine: Ser-279, Ser-287, Ser-296, and Ser-333. Thr-335 is subject to Phosphothreonine. The segment covering 346–359 (HSRPRSSSVKRKRV) has biased composition (basic residues). Disordered stretches follow at residues 346-375 (HSRPRSSSVKRKRVSYGFHSPPKEKCKRKR), 418-443 (PDNLKERNSENLPPKSQLPSNPAQFS), and 563-624 (VGLK…PTRR). Polar residues-rich tracts occupy residues 434 to 443 (QLPSNPAQFS) and 566 to 582 (KSTQDKGTTSKISNSSE). Residues 586–608 (PSEHEPRSVVDCNVERSAEEKEN) are compositionally biased toward basic and acidic residues. BRCT domains lie at 647-737 (SGKG…PFEL) and 758-840 (YRGT…NYLL).

In terms of assembly, interacts with CDC27 and maybe other components of the APC/C complex. Interacts with histone variant H2AX under DNA damage conditions.

It is found in the cytoplasm. It localises to the cytoskeleton. The protein localises to the microtubule organizing center. The protein resides in the centrosome. Its function is as follows. Implicated in chromosome condensation and DNA damage induced cellular responses. May play a role in neurogenesis and regulation of the size of the cerebral cortex. This is Microcephalin from Macaca fascicularis (Crab-eating macaque).